The sequence spans 331 residues: Ketol-acid reductoisomerase (NADP(+)) (331 aa).

Residues 2–182 (AKMYYDSDCN…GAGRAGILET (181 aa)) enclose the KARI N-terminal Rossmann domain. NADP(+) is bound by residues 25 to 28 (YGSQ), S51, and 83 to 86 (DEKQ). H108 is a catalytic residue. G134 is an NADP(+) binding site. Positions 183–329 (TFREETETDL…AELRKMMSWL (147 aa)) constitute a KARI C-terminal knotted domain. D191, E195, E227, and E231 together coordinate Mg(2+). S252 lines the substrate pocket.

The protein belongs to the ketol-acid reductoisomerase family. It depends on Mg(2+) as a cofactor.

The catalysed reaction is (2R)-2,3-dihydroxy-3-methylbutanoate + NADP(+) = (2S)-2-acetolactate + NADPH + H(+). The enzyme catalyses (2R,3R)-2,3-dihydroxy-3-methylpentanoate + NADP(+) = (S)-2-ethyl-2-hydroxy-3-oxobutanoate + NADPH + H(+). The protein operates within amino-acid biosynthesis; L-isoleucine biosynthesis; L-isoleucine from 2-oxobutanoate: step 2/4. It functions in the pathway amino-acid biosynthesis; L-valine biosynthesis; L-valine from pyruvate: step 2/4. In terms of biological role, involved in the biosynthesis of branched-chain amino acids (BCAA). Catalyzes an alkyl-migration followed by a ketol-acid reduction of (S)-2-acetolactate (S2AL) to yield (R)-2,3-dihydroxy-isovalerate. In the isomerase reaction, S2AL is rearranged via a Mg-dependent methyl migration to produce 3-hydroxy-3-methyl-2-ketobutyrate (HMKB). In the reductase reaction, this 2-ketoacid undergoes a metal-dependent reduction by NADPH to yield (R)-2,3-dihydroxy-isovalerate. The polypeptide is Ketol-acid reductoisomerase (NADP(+)) (Ruminiclostridium cellulolyticum (strain ATCC 35319 / DSM 5812 / JCM 6584 / H10) (Clostridium cellulolyticum)).